Here is a 254-residue protein sequence, read N- to C-terminus: Phosphoglycerate mutase 1 (254 aa).

Residues 10–17 (RHGESAWN) and 23–24 (SG) each bind substrate. The Tele-phosphohistidine intermediate role is filled by His11. Phosphoserine is present on residues Ser14 and Ser23. Tyr26 carries the phosphotyrosine modification. Residue Ser31 is modified to Phosphoserine. Substrate-binding positions include Arg62, 89–92 (ERHY), and Lys100. Glu89 (proton donor/acceptor) is an active-site residue. N6-acetyllysine is present on Lys106. 116–117 (RR) lines the substrate pocket. Ser118 carries the phosphoserine modification. Residue 187 to 188 (GN) coordinates substrate. N6-acetyllysine; alternate is present on Lys251. Lys251 carries the post-translational modification N6-succinyllysine; alternate. An N6-acetyllysine mark is found at Lys253 and Lys254.

It belongs to the phosphoglycerate mutase family. BPG-dependent PGAM subfamily. As to quaternary structure, homodimer. Acetylated at Lys-253, Lys-253 and Lys-254 under high glucose condition. Acetylation increases catalytic activity. Under glucose restriction SIRT1 levels dramatically increase and it deacetylates the enzyme. As to expression, expressed in the liver and brain. Not found in the muscle.

It catalyses the reaction (2R)-2-phosphoglycerate = (2R)-3-phosphoglycerate. The catalysed reaction is (2R)-3-phospho-glyceroyl phosphate = (2R)-2,3-bisphosphoglycerate + H(+). In terms of biological role, catalyzes the interconversion of 2-phosphoglycerate and 3-phosphoglyceratea crucial step in glycolysis, by using 2,3-bisphosphoglycerate. Also catalyzes the interconversion of (2R)-2,3-bisphosphoglycerate and (2R)-3-phospho-glyceroyl phosphate. In Homo sapiens (Human), this protein is Phosphoglycerate mutase 1.